The following is a 225-amino-acid chain: Dehydrin DHN4 (225 aa).

The segment at 1–78 (MEYQGQQHGR…EDDGMGGRRK (78 aa)) is disordered. Residues 21 to 39 (HGVGTGMGTHGGVGTGAAA) are compositionally biased toward gly residues. Repeat copies occupy residues 105-118 (YGQQ…TGGT), 119-136 (YGQQ…TDGT), 137-159 (YGQQ…TGGT), 160-178 (YGQQ…GTGG), and 179-199 (TYGQ…TGGT). The interval 105-199 (YGQQGTGMAG…GTGMHGTGGT (95 aa)) is 5 X approximate tandem repeats.

The protein belongs to the plant dehydrin family.

The polypeptide is Dehydrin DHN4 (DHN4) (Hordeum vulgare (Barley)).